The primary structure comprises 517 residues: Benzoate 4-monooxygenase bphA (517 aa).

The helical transmembrane segment at 4 to 24 threads the bilayer; it reads LLLSPYGAYLGLALLVLYYLL. N-linked (GlcNAc...) asparagine glycans are attached at residues asparagine 282 and asparagine 325. Position 461 (cysteine 461) interacts with heme.

Belongs to the cytochrome P450 family. Requires heme as cofactor.

It is found in the membrane. The enzyme catalyses benzoate + reduced [NADPH--hemoprotein reductase] + O2 = 4-hydroxybenzoate + oxidized [NADPH--hemoprotein reductase] + H2O + H(+). Functionally, cytochrome P450 monooxygenase; part of the benzoic acid degradation pathway also known as the protocatechuic acid pathway. Benzoic acid debradation begins with the conversion of benzoic acid into 4-hydroxybenzoic acid through hydroxylation by the benzoate-4-monooxygenase bphA, and its partner NADPH-cytochrome P450 reductase cprA which act as a mediator in electron donation from NADPH. 4-Hydroxybenzoic acid is then converted into 3,4-dihydroxybenzoic acid (also called protocatechuic acid) by the p-hydroxybenzoate-m-hydroxylase phhA. Protocatechuic acid is converted into 3-carboxy-cis,cis-muconic acid by the intradiol ring-cleavage dioxygenase prcA, which is further metabolized through the 3-oxoadipate pathway to finally enter the tricarboxylic acid cycle (TCA). Responsible for cytochrome P450 dependent benzoate hydroxylation in microsomes; requires cprA as the mediator in electron donation from NADPH. The chain is Benzoate 4-monooxygenase bphA from Aspergillus niger.